A 564-amino-acid polypeptide reads, in one-letter code: Lamassu protein LmuB (564 aa).

Functionally, component of antiviral defense system Lamassu type II, composed of LmuA and LmuB. Expression of Lamassu type II in B.subtilis (strain BEST7003) confers resistance to phage SpBeta. May be an ATPase. The protein is Lamassu protein LmuB of Bacillus cereus (strain VD014).